The following is a 246-amino-acid chain: 1-(5-phosphoribosyl)-5-[(5-phosphoribosylamino)methylideneamino] imidazole-4-carboxamide isomerase (246 aa).

D8 (proton acceptor) is an active-site residue. Residue D131 is the Proton donor of the active site.

This sequence belongs to the HisA/HisF family.

The protein resides in the cytoplasm. It carries out the reaction 1-(5-phospho-beta-D-ribosyl)-5-[(5-phospho-beta-D-ribosylamino)methylideneamino]imidazole-4-carboxamide = 5-[(5-phospho-1-deoxy-D-ribulos-1-ylimino)methylamino]-1-(5-phospho-beta-D-ribosyl)imidazole-4-carboxamide. The protein operates within amino-acid biosynthesis; L-histidine biosynthesis; L-histidine from 5-phospho-alpha-D-ribose 1-diphosphate: step 4/9. This chain is 1-(5-phosphoribosyl)-5-[(5-phosphoribosylamino)methylideneamino] imidazole-4-carboxamide isomerase, found in Lactococcus lactis subsp. cremoris (strain SK11).